A 496-amino-acid polypeptide reads, in one-letter code: Probable histidine ammonia-lyase (496 aa).

The segment at residues 141-143 (ASG) is a cross-link (5-imidazolinone (Ala-Gly)). A 2,3-didehydroalanine (Ser) modification is found at serine 142.

This sequence belongs to the PAL/histidase family. Contains an active site 4-methylidene-imidazol-5-one (MIO), which is formed autocatalytically by cyclization and dehydration of residues Ala-Ser-Gly.

Its subcellular location is the cytoplasm. It catalyses the reaction L-histidine = trans-urocanate + NH4(+). It participates in amino-acid degradation; L-histidine degradation into L-glutamate; N-formimidoyl-L-glutamate from L-histidine: step 1/3. The chain is Probable histidine ammonia-lyase from Thermoplasma acidophilum (strain ATCC 25905 / DSM 1728 / JCM 9062 / NBRC 15155 / AMRC-C165).